A 458-amino-acid chain; its full sequence is GDP-fucose protein O-fucosyltransferase 3 (458 aa).

The Cytoplasmic portion of the chain corresponds to 1 to 11 (MRRISVKKLCS). A helical; Signal-anchor for type II membrane protein membrane pass occupies residues 12–32 (FCLCACAFAFLVMTFQVIELL). Residues 33–458 (GQFEQTEHRQ…TQFWREVFTD (426 aa)) lie on the Lumenal side of the membrane. Asparagine 92, asparagine 150, and asparagine 300 each carry an N-linked (GlcNAc...) asparagine glycan. Cysteine 371 and cysteine 374 are oxidised to a cystine. The N-linked (GlcNAc...) asparagine glycan is linked to asparagine 445.

It belongs to the glycosyltransferase 10 family.

The protein localises to the endoplasmic reticulum membrane. It catalyses the reaction L-threonyl-[protein] + GDP-beta-L-fucose = 3-O-(alpha-L-fucosyl)-L-threonyl-[protein] + GDP + H(+). The enzyme catalyses L-seryl-[protein] + GDP-beta-L-fucose = 3-O-(alpha-L-fucosyl)-L-seryl-[protein] + GDP + H(+). Its pathway is protein modification; protein glycosylation. Its function is as follows. Protein O-fucosyltransferase that specifically catalyzes O-fucosylation of serine or threonine residues in EMI domains of target proteins. Attaches fucose through an O-glycosidic linkage. O-fucosylation of EMI domain-containing proteins may be required for facilitating protein folding and secretion. This chain is GDP-fucose protein O-fucosyltransferase 3 (fut10), found in Danio rerio (Zebrafish).